A 185-amino-acid chain; its full sequence is Elongation factor P (185 aa).

This sequence belongs to the elongation factor P family.

Its subcellular location is the cytoplasm. The protein operates within protein biosynthesis; polypeptide chain elongation. Its function is as follows. Involved in peptide bond synthesis. Stimulates efficient translation and peptide-bond synthesis on native or reconstituted 70S ribosomes in vitro. Probably functions indirectly by altering the affinity of the ribosome for aminoacyl-tRNA, thus increasing their reactivity as acceptors for peptidyl transferase. This is Elongation factor P from Pseudothermotoga lettingae (strain ATCC BAA-301 / DSM 14385 / NBRC 107922 / TMO) (Thermotoga lettingae).